We begin with the raw amino-acid sequence, 271 residues long: 2-dehydro-3-deoxyphosphooctonate aldolase (271 aa).

This sequence belongs to the KdsA family.

Its subcellular location is the cytoplasm. The catalysed reaction is D-arabinose 5-phosphate + phosphoenolpyruvate + H2O = 3-deoxy-alpha-D-manno-2-octulosonate-8-phosphate + phosphate. Its pathway is carbohydrate biosynthesis; 3-deoxy-D-manno-octulosonate biosynthesis; 3-deoxy-D-manno-octulosonate from D-ribulose 5-phosphate: step 2/3. It functions in the pathway bacterial outer membrane biogenesis; lipopolysaccharide biosynthesis. The chain is 2-dehydro-3-deoxyphosphooctonate aldolase from Campylobacter jejuni subsp. jejuni serotype O:2 (strain ATCC 700819 / NCTC 11168).